The chain runs to 151 residues: Small ribosomal subunit protein uS15 (151 aa).

S32 is subject to Phosphoserine. Residues K39 and K43 each participate in a glycyl lysine isopeptide (Lys-Gly) (interchain with G-Cter in ubiquitin) cross-link.

The protein belongs to the universal ribosomal protein uS15 family. In terms of assembly, component of the small ribosomal subunit (SSU). Mature yeast ribosomes consist of a small (40S) and a large (60S) subunit. The 40S small subunit contains 1 molecule of ribosomal RNA (18S rRNA) and 33 different proteins (encoded by 57 genes). The large 60S subunit contains 3 rRNA molecules (25S, 5.8S and 5S rRNA) and 46 different proteins (encoded by 81 genes).

It localises to the cytoplasm. Functionally, component of the ribosome, a large ribonucleoprotein complex responsible for the synthesis of proteins in the cell. The small ribosomal subunit (SSU) binds messenger RNAs (mRNAs) and translates the encoded message by selecting cognate aminoacyl-transfer RNA (tRNA) molecules. The large subunit (LSU) contains the ribosomal catalytic site termed the peptidyl transferase center (PTC), which catalyzes the formation of peptide bonds, thereby polymerizing the amino acids delivered by tRNAs into a polypeptide chain. The nascent polypeptides leave the ribosome through a tunnel in the LSU and interact with protein factors that function in enzymatic processing, targeting, and the membrane insertion of nascent chains at the exit of the ribosomal tunnel. This is Small ribosomal subunit protein uS15 from Saccharomyces cerevisiae (strain ATCC 204508 / S288c) (Baker's yeast).